A 224-amino-acid polypeptide reads, in one-letter code: Cytidylate kinase (224 aa).

Residue 11 to 19 (GPAGAGKST) coordinates ATP.

It belongs to the cytidylate kinase family. Type 1 subfamily.

It is found in the cytoplasm. The enzyme catalyses CMP + ATP = CDP + ADP. The catalysed reaction is dCMP + ATP = dCDP + ADP. The protein is Cytidylate kinase of Lysinibacillus sphaericus (strain C3-41).